We begin with the raw amino-acid sequence, 85 residues long: Large ribosomal subunit protein bL27 (85 aa).

The tract at residues 1 to 20 (MAHKKAGGSTRNGRDSESKR) is disordered.

The protein belongs to the bacterial ribosomal protein bL27 family.

The sequence is that of Large ribosomal subunit protein bL27 from Yersinia enterocolitica serotype O:8 / biotype 1B (strain NCTC 13174 / 8081).